Consider the following 569-residue polypeptide: Putative potassium-transporting ATPase ATP-binding subunit (569 aa).

2 helical membrane passes run 34–54 (PVMFVVWAGSVLATLLTLAMV) and 58–78 (IAGSALFTGVISLWLWFTVLF). Residue Asp-194 is the 4-aspartylphosphate intermediate of the active site. Residues Asp-231, Glu-235, 264 to 271 (FTAQSRMS), and Lys-282 contribute to the ATP site. Mg(2+) contacts are provided by Asp-405 and Asp-409. The next 3 membrane-spanning stretches (helical) occupy residues 475 to 495 (FAIIPAAFAATYPQLNALNVM), 503 to 523 (AILSAVIFNALIIIFLIPLAL), and 543 to 563 (IYGLGGLVVPFIGIKVIDVLL).

The protein belongs to the cation transport ATPase (P-type) (TC 3.A.3) family. Type IA subfamily. In terms of assembly, the system is composed of three essential subunits: KdpA, KdpB and KdpC.

Its subcellular location is the cell inner membrane. The enzyme catalyses K(+)(out) + ATP + H2O = K(+)(in) + ADP + phosphate + H(+). Part of the high-affinity ATP-driven potassium transport (or Kdp) system, which catalyzes the hydrolysis of ATP coupled with the electrogenic transport of potassium into the cytoplasm. This subunit is responsible for energy coupling to the transport system and for the release of the potassium ions to the cytoplasm. The polypeptide is Putative potassium-transporting ATPase ATP-binding subunit (Salmonella typhi).